The chain runs to 236 residues: 2-C-methyl-D-erythritol 4-phosphate cytidylyltransferase (236 aa).

The protein belongs to the IspD/TarI cytidylyltransferase family. IspD subfamily.

It carries out the reaction 2-C-methyl-D-erythritol 4-phosphate + CTP + H(+) = 4-CDP-2-C-methyl-D-erythritol + diphosphate. The protein operates within isoprenoid biosynthesis; isopentenyl diphosphate biosynthesis via DXP pathway; isopentenyl diphosphate from 1-deoxy-D-xylulose 5-phosphate: step 2/6. Catalyzes the formation of 4-diphosphocytidyl-2-C-methyl-D-erythritol from CTP and 2-C-methyl-D-erythritol 4-phosphate (MEP). In Symbiobacterium thermophilum (strain DSM 24528 / JCM 14929 / IAM 14863 / T), this protein is 2-C-methyl-D-erythritol 4-phosphate cytidylyltransferase.